The chain runs to 287 residues: MSMIDDLPPLRDVIKRHALSARKSLGQNFLLDLNLTSRIARAAGPLQDATVVEIGPGPGGLTRALLAVGAKHVIAIERDERALGALEEISDRYPGRLTIINADATDFDPRPLLGTTRAKIVANLPYNIATALLIRWLSIEPWPPWYDVMVLMFQREVAERIVARENEDAYGRLGVLSNWRAETKILFDISPAAFVPQPQVTSSVVRLIPRYNPEPCDRRSLEQVAAAAFGHRRKMLRQSLKSLPADPASLAAAAGIDPTRRAETVSISGFAAMARELASIVGSGKRL.

Residues asparagine 28, leucine 30, glycine 55, glutamate 77, aspartate 103, and asparagine 123 each coordinate S-adenosyl-L-methionine.

This sequence belongs to the class I-like SAM-binding methyltransferase superfamily. rRNA adenine N(6)-methyltransferase family. RsmA subfamily.

It localises to the cytoplasm. It carries out the reaction adenosine(1518)/adenosine(1519) in 16S rRNA + 4 S-adenosyl-L-methionine = N(6)-dimethyladenosine(1518)/N(6)-dimethyladenosine(1519) in 16S rRNA + 4 S-adenosyl-L-homocysteine + 4 H(+). Specifically dimethylates two adjacent adenosines (A1518 and A1519) in the loop of a conserved hairpin near the 3'-end of 16S rRNA in the 30S particle. May play a critical role in biogenesis of 30S subunits. The protein is Ribosomal RNA small subunit methyltransferase A of Nitrobacter winogradskyi (strain ATCC 25391 / DSM 10237 / CIP 104748 / NCIMB 11846 / Nb-255).